We begin with the raw amino-acid sequence, 183 residues long: Large ribosomal subunit protein uL5 (183 aa).

Belongs to the universal ribosomal protein uL5 family. Part of the 50S ribosomal subunit; part of the 5S rRNA/L5/L18/L25 subcomplex. Contacts the 5S rRNA and the P site tRNA. Forms a bridge to the 30S subunit in the 70S ribosome.

Its function is as follows. This is one of the proteins that bind and probably mediate the attachment of the 5S RNA into the large ribosomal subunit, where it forms part of the central protuberance. In the 70S ribosome it contacts protein S13 of the 30S subunit (bridge B1b), connecting the 2 subunits; this bridge is implicated in subunit movement. Contacts the P site tRNA; the 5S rRNA and some of its associated proteins might help stabilize positioning of ribosome-bound tRNAs. The sequence is that of Large ribosomal subunit protein uL5 from Flavobacterium johnsoniae (strain ATCC 17061 / DSM 2064 / JCM 8514 / BCRC 14874 / CCUG 350202 / NBRC 14942 / NCIMB 11054 / UW101) (Cytophaga johnsonae).